The following is a 270-amino-acid chain: G-box-binding factor 4 (270 aa).

The interval 1-46 is disordered; that stretch reads MASFKLMSSSNSDLSRRNSSSASSSPSIRSSHHLRPNPHADHSRIS. The segment covering 8–29 has biased composition (low complexity); that stretch reads SSSNSDLSRRNSSSASSSPSIR. Position 27 is a phosphoserine (Ser-27). One can recognise a bZIP domain in the interval 187 to 250; the sequence is AAQRQKRMIK…YKKLMEVLIP (64 aa). Residues 190 to 208 are basic motif; the sequence is RQKRMIKNRESAARSRERK. The interval 215–229 is leucine-zipper; the sequence is LETLAAKLEEENEQL. The interval 250–270 is disordered; the sequence is PVDEKPRPPSRPLSRSHSLEW. Low complexity predominate over residues 261–270; the sequence is PLSRSHSLEW.

Belongs to the bZIP family. DNA-binding heterodimer with GBF2 and GBF3; non DNA-binding homodimer.

The protein localises to the nucleus. Its function is as follows. Binds to the G-box motif (5'-CCACGTGG-3') of the rbcS-1A gene promoter. G-box and G-box-like motifs are cis-acting elements defined in promoters of certain plant genes which are regulated by such diverse stimuli as light-induction or hormone control. The chain is G-box-binding factor 4 (GBF4) from Arabidopsis thaliana (Mouse-ear cress).